The following is a 211-amino-acid chain: Putative truncated flagellar export/assembly protein LafU (211 aa).

The OmpA-like domain maps to 58 to 176 (LRVLIKDDQN…RIEIMVLTKS (119 aa)).

The protein belongs to the MotB family.

The polypeptide is Putative truncated flagellar export/assembly protein LafU (Escherichia coli (strain K12)).